The following is a 653-amino-acid chain: Hepatocyte growth factor activator serine protease (653 aa).

A signal peptide spans 1-34 (MGRQAWISSLCPLPRPCPFLLLLLLLVVPRGAQP). The disordered stretch occupies residues 34–98 (PQAGRNHTEP…SSSPPGGQVL (65 aa)). Positions 35–369 (QAGRNHTEPP…RLTACESLAR (335 aa)) are cleaved as a propeptide — removed in mature form. N-linked (GlcNAc...) asparagine glycans are attached at residues N39, N47, and N63. Residues 47–59 (NVTATPVTPTIPV) show a composition bias toward low complexity. One can recognise a Fibronectin type-II domain in the interval 100–147 (ESGQPCRFPFRYGGRMLHSCTSEGSAYRKWCATTHNYDRDRAWGYCAE). Cystine bridges form between C105-C130, C119-C145, C161-C172, C166-C183, C185-C194, C199-C227, C225-C234, C242-C253, C247-C264, C266-C275, C283-C364, C304-C346, C335-C359, C392-C519, C430-C446, C438-C508, C533-C602, C565-C581, and C592-C620. Residues 157 to 195 (ILDPCASGPCLNGGTCSSTHDHGSYHCSCPLAFTGKDCG) enclose the EGF-like 1 domain. The 41-residue stretch at 197–237 (EKCFDETRYEYFEVGDHWARVSEGHVEQCGCMEGQARCEDT) folds into the Fibronectin type-I domain. The EGF-like 2 domain occupies 238 to 276 (HHTACLSSPCLNGGTCHLIVGTGTSVCTCPLGYAGRFCN). The Kringle domain maps to 283 to 364 (CFLGNGTEYR…SWEYCRLTAC (82 aa)). N-linked (GlcNAc...) asparagine glycosylation occurs at N287. Residues 406 to 644 (IIGGSSSLPG…YVDWINDRIR (239 aa)) enclose the Peptidase S1 domain. H445 functions as the Charge relay system in the catalytic mechanism. An N-linked (GlcNAc...) asparagine glycan is attached at N466. D495 acts as the Charge relay system in catalysis. N544 carries an N-linked (GlcNAc...) asparagine glycan. S596 serves as the catalytic Charge relay system.

Belongs to the peptidase S1 family. In terms of assembly, heterodimer of a short chain and a long chain linked by a disulfide bond. The active form of HGFAC presents in the serum is derived from the COOH-terminal region of the precursor by the cleavage of bonds between Arg-369 and Val-370 and Arg-405 and Ile-406.

It localises to the secreted. In terms of biological role, serine protease that hydrolyzes the inactive zymogen hepatocyte growth factor (HGFsc) to an activated disulfide-linked heterodimer, then initiating hepatocyte growth factor receptor signaling pathway. The chain is Hepatocyte growth factor activator serine protease from Mus musculus (Mouse).